The chain runs to 82 residues: Sec-independent protein translocase protein TatA (82 aa).

Residues 1 to 21 (MGLSTTHLIIFLVIIVLIFGT) traverse the membrane as a helical segment.

It belongs to the TatA/E family. The Tat system comprises two distinct complexes: a TatABC complex, containing multiple copies of TatA, TatB and TatC subunits, and a separate TatA complex, containing only TatA subunits. Substrates initially bind to the TatABC complex, which probably triggers association of the separate TatA complex to form the active translocon.

It is found in the cell inner membrane. Its function is as follows. Part of the twin-arginine translocation (Tat) system that transports large folded proteins containing a characteristic twin-arginine motif in their signal peptide across membranes. TatA could form the protein-conducting channel of the Tat system. The protein is Sec-independent protein translocase protein TatA of Leptothrix cholodnii (strain ATCC 51168 / LMG 8142 / SP-6) (Leptothrix discophora (strain SP-6)).